We begin with the raw amino-acid sequence, 2546 residues long: Formin-J (2546 aa).

Disordered regions lie at residues 1–40 (MEEN…SFVK), 61–108 (ENSN…PLSE), 188–270 (KNIT…PNSA), 369–414 (TTNN…SSSS), 502–541 (TNSF…TPNS), 802–849 (SSIS…NTRK), 879–898 (TSVP…NNNN), 987–1101 (TTNN…GGIG), 1485–1529 (PKSK…ASLS), 1558–1601 (KRSK…FKSP), 1659–1775 (INNI…KVNS), 1840–1869 (VPTT…ETQS), and 2014–2033 (SNLS…SSLE). Low complexity-rich tracts occupy residues 16–37 (NNNE…SSSS) and 62–98 (NSNN…NSTS). 2 stretches are compositionally biased toward polar residues: residues 99 to 108 (GSKDNTPLSE) and 188 to 198 (KNITPSKNNSP). Low complexity-rich tracts occupy residues 203 to 237 (NNNN…NNNN) and 247 to 270 (NKNS…PNSA). Polar residues predominate over residues 377–389 (AESLTTYSESSEI). Low complexity-rich tracts occupy residues 390–414 (STDS…SSSS) and 502–513 (TNSFGSSTTTTI). The 54-residue stretch at 391 to 444 (TDSTGVCSSSSSTSSTLSSKSSSSSSFNKFMEFLLIYIEDNDSTNGTWVNGNKL) folds into the FHA domain. The region spanning 457-963 (KITLSTPDFS…SSISNEQEYQ (507 aa)) is the GBD/FH3 domain. 2 stretches are compositionally biased toward polar residues: residues 879 to 891 (TSVP…KNPL) and 992 to 1007 (SSAK…NKSP). Pro residues predominate over residues 1033–1042 (VPPPPPPPPG). Low complexity predominate over residues 1043–1056 (GNNNNESDVPSSSG). The span at 1057-1097 (GPPPPPPPPPPPGKSSGGGPPPPPPPPPKGGKGGPPPPPPI) shows a compositional bias: pro residues. Residues 1072–1098 (SGGGPPPPPPPPPKGGKGGPPPPPPIG) form the FH1 domain. One can recognise an FH2 domain in the interval 1106 to 1495 (KVKEEQPSVP…KSKKYQEQQN (390 aa)). Residues 1492-1502 (EQQNKPTQNND) show a composition bias toward polar residues. Over residues 1507–1529 (SKLSNLPSSSSINDESSSSASLS) the composition is skewed to low complexity. The DAD domain occupies 1563 to 1593 (EQEPVVEPIQITPKVGSAASAEPSPSIKSRD). Over residues 1665 to 1679 (SSSSSSSSSSSSSSS) the composition is skewed to low complexity. Basic and acidic residues predominate over residues 1687–1717 (HNTESEIKKEFISNSSMDKDKEKIKEKEKGT). The span at 1732-1745 (KSTTTSPSSSSSKK) shows a compositional bias: low complexity. A compositionally biased stretch (polar residues) spans 1746 to 1757 (QIPSLSECLQES). Low complexity-rich tracts occupy residues 1763 to 1775 (RSSS…KVNS) and 1841 to 1853 (PTTT…TTQT). Residues 2067-2118 (IDDNQQKQQKQQQQQQQQQQQQQQLPQPQQQQQQQQQQQQQQQQQQQQQQQQ) are a coiled coil. Over residues 2121–2154 (QQSTTTTTISTHHPQLKQVQPQSPSSLSQQPTQQ) the composition is skewed to low complexity. Disordered regions lie at residues 2121–2369 (QQST…PKTV), 2381–2473 (SHKK…SYSS), and 2485–2510 (SPSS…LKTP). Residues 2160-2179 (QPSSPLQSHYKPQQKPQTTY) are compositionally biased toward polar residues. Composition is skewed to low complexity over residues 2188–2206 (ANPF…SNAS) and 2237–2256 (SSAS…TPLS). The segment covering 2274–2287 (TPPSSSISNSTATT) has biased composition (polar residues). Over residues 2302 to 2315 (SPSSSSLEQSSNAS) the composition is skewed to low complexity. Residues 2332–2342 (FKKHKKSHSKS) are compositionally biased toward basic residues. Composition is skewed to low complexity over residues 2388–2439 (VDQS…SSSS), 2459–2473 (NISS…SYSS), and 2485–2497 (SPSS…KPSP). Polar residues predominate over residues 2499–2508 (AVSSTSSTLK).

Belongs to the formin homology family. Diaphanous subfamily. As to quaternary structure, interacts (via GBD/FH3 domain) with activated Rho-GTPases.

Its function is as follows. Formins play an important role in the nucleation of actin and the formation of linear actin filaments. This chain is Formin-J (forJ), found in Dictyostelium discoideum (Social amoeba).